The primary structure comprises 242 residues: uncharacterized protein (242 aa).

3 consecutive transmembrane segments (helical) span residues 75 to 95 (YAIF…HNFY), 116 to 136 (IVLI…FSLI), and 176 to 196 (IQGL…LEVI). Positions 204–242 (DVEMSSMRGQAITTEPASDNTMAEGTDCNTSKDVESGSS) are disordered. The span at 210-232 (MRGQAITTEPASDNTMAEGTDCN) shows a compositional bias: polar residues. The segment covering 233–242 (TSKDVESGSS) has biased composition (basic and acidic residues).

It is found in the cytoplasm. The protein resides in the membrane. This is an uncharacterized protein from Schizosaccharomyces pombe (strain 972 / ATCC 24843) (Fission yeast).